The sequence spans 115 residues: General stress protein 17M (115 aa).

The sequence is that of General stress protein 17M (yflT) from Bacillus subtilis (strain 168).